The primary structure comprises 200 residues: Holliday junction branch migration complex subunit RuvA (200 aa).

Residues 1-63 (MIASVRGVVT…EDSLTLYGFA (63 aa)) form a domain I region. The segment at 64-142 (DDNAKALFEL…PVPVGGDGAA (79 aa)) is domain II. Positions 143 to 151 (GVTTGAWPE) are flexible linker. Residues 151-200 (EQVRQALVGLGWTAGQAEQAVAAVAETVDGEVPPVPVLLRQAIRLLGRTR) form a domain III region.

This sequence belongs to the RuvA family. As to quaternary structure, homotetramer. Forms an RuvA(8)-RuvB(12)-Holliday junction (HJ) complex. HJ DNA is sandwiched between 2 RuvA tetramers; dsDNA enters through RuvA and exits via RuvB. An RuvB hexamer assembles on each DNA strand where it exits the tetramer. Each RuvB hexamer is contacted by two RuvA subunits (via domain III) on 2 adjacent RuvB subunits; this complex drives branch migration. In the full resolvosome a probable DNA-RuvA(4)-RuvB(12)-RuvC(2) complex forms which resolves the HJ.

Its subcellular location is the cytoplasm. Its function is as follows. The RuvA-RuvB-RuvC complex processes Holliday junction (HJ) DNA during genetic recombination and DNA repair, while the RuvA-RuvB complex plays an important role in the rescue of blocked DNA replication forks via replication fork reversal (RFR). RuvA specifically binds to HJ cruciform DNA, conferring on it an open structure. The RuvB hexamer acts as an ATP-dependent pump, pulling dsDNA into and through the RuvAB complex. HJ branch migration allows RuvC to scan DNA until it finds its consensus sequence, where it cleaves and resolves the cruciform DNA. This chain is Holliday junction branch migration complex subunit RuvA, found in Salinispora arenicola (strain CNS-205).